The following is a 1072-amino-acid chain: MINPISFRPGPVTFWTTLIYLALLIPIVIINEKTPAAPKTAEPFKGVNLTEAWLDLTTITRAYHPYNSKFNEEVRRYLLEKVETILEENGASWVSDGQMTTVKDGKSAAVTVFDDNVSNSTFVMGKSNGTTFTRTDSINNAAYFEGTNILVYIRGKEDDEGEWWEADYAHGMRRNAKGLTLVNAHYDSVSTGFGATDDGMGVVTALQVLKYFTAPGHQPQRGIVVMLNNGEEDWLYGAHALGQHKLNPFIHTFLNLEGAGAGGRAIVFRATDREVMAAYARTSHPFGTVIASDAFGLGFISSGTDYSVLVDAYGQRGIDLAFFKPRARYHTNQDDTRHTSKGSLWHMLSAAIHTTKQFSGDTGNTFIGQRPDKAHGKVANGRSSNGVWFDLFGKSFVLFGLRGMFAWSLTLLIATPLVLVGITWLLRNLDKDYFFTSTVKTKEHPEYEAVPIGGWKGFFRFPFALGVAVFFTISSALLMNKVNPLIVYSSRYSVWVMMVSIFYFSFWMIMRGANFVRPSALHRGYANLWLFVFGWIVLVAVTALEDRRRIAAGYIFVFLESAIFLSCLISFVELLAVPRKSSYALQVQEDYDGQEHDHNGYQGFRDSTDEPSLRARAESSASAASPPSPTVAQEPSKSKAPAGTTNGLSTAPSVAAHSSQPQPAPTTPIPGRSSGAPSTASRDENESEDDDEPTERTPLVGGNGTNDRGRTTFATTYRRSITALVHGARKMEEDGEPYDHEQEWSGHLPSWAWFFQFLLLGPFMIILAAQTGLMLTDAVYQTGSDGSKLITPYLIIFVFTVLLILPLTPFIHRVTHHIPVFLLVVFIVTLTYNLIAFPFSANNRYKTFFGQYIDVATGDNKVCYTGIEEYVRPIIAELPSASGREVTCGKSLRRGSTISTCCFDGSAVPPKLGSEDDNGLPEDSYADLITINATRSTKRGDSSRTTARIEITADNTKSCFLQFKKPVSALAIENGSGWDDRFGQYPEDGVGLVRLWHREFGKTWVVNAEWKGSETRKEYDENDGTVICMWSDANTPGTIPALDEALQFVPSWAAVTKFSEGLVEGRKAFKIV.

Residues 1 to 9 (MINPISFRP) lie on the Cytoplasmic side of the membrane. Residues 10–30 (GPVTFWTTLIYLALLIPIVII) traverse the membrane as a helical segment. Residues 31–404 (NEKTPAAPKT…SFVLFGLRGM (374 aa)) are Vacuolar-facing. N-linked (GlcNAc...) asparagine glycans are attached at residues Asn48, Asn116, Asn119, and Asn128. Positions 185 and 197 each coordinate Zn(2+). The active-site Proton acceptor is Glu231. 3 residues coordinate Zn(2+): Glu232, Glu257, and His330. The helical transmembrane segment at 405-425 (FAWSLTLLIATPLVLVGITWL) threads the bilayer. Over 426–457 (LRNLDKDYFFTSTVKTKEHPEYEAVPIGGWKG) the chain is Cytoplasmic. A helical transmembrane segment spans residues 458-478 (FFRFPFALGVAVFFTISSALL). The Vacuolar segment spans residues 479 to 492 (MNKVNPLIVYSSRY). The chain crosses the membrane as a helical span at residues 493 to 513 (SVWVMMVSIFYFSFWMIMRGA). Residues 514–523 (NFVRPSALHR) are Cytoplasmic-facing. Residues 524–544 (GYANLWLFVFGWIVLVAVTAL) form a helical membrane-spanning segment. The Vacuolar segment spans residues 545–554 (EDRRRIAAGY). The helical transmembrane segment at 555 to 575 (IFVFLESAIFLSCLISFVELL) threads the bilayer. Topologically, residues 576–747 (AVPRKSSYAL…YDHEQEWSGH (172 aa)) are cytoplasmic. The interval 593-713 (GQEHDHNGYQ…GTNDRGRTTF (121 aa)) is disordered. Positions 606 to 617 (DSTDEPSLRARA) are enriched in basic and acidic residues. The segment covering 643 to 661 (GTTNGLSTAPSVAAHSSQP) has biased composition (polar residues). A helical transmembrane segment spans residues 748–768 (LPSWAWFFQFLLLGPFMIILA). Over 769 to 789 (AQTGLMLTDAVYQTGSDGSKL) the chain is Vacuolar. The helical transmembrane segment at 790–810 (ITPYLIIFVFTVLLILPLTPF) threads the bilayer. Topologically, residues 811–817 (IHRVTHH) are cytoplasmic. Residues 818-838 (IPVFLLVVFIVTLTYNLIAFP) traverse the membrane as a helical segment. At 839-1072 (FSANNRYKTF…VEGRKAFKIV (234 aa)) the chain is on the vacuolar side. Asn932 and Asn974 each carry an N-linked (GlcNAc...) asparagine glycan.

It belongs to the peptidase M28 family. Zn(2+) serves as cofactor.

Its subcellular location is the vacuole membrane. Functionally, may be involved in vacuolar sorting and osmoregulation. The sequence is that of Vacuolar membrane protease from Neurospora crassa (strain ATCC 24698 / 74-OR23-1A / CBS 708.71 / DSM 1257 / FGSC 987).